The chain runs to 591 residues: Aspartate--tRNA(Asp/Asn) ligase (591 aa).

E174 provides a ligand contact to L-aspartate. The aspartate stretch occupies residues 198–201; that stretch reads QLFK. Position 220 (R220) interacts with L-aspartate. Residues 220–222 and Q229 each bind ATP; that span reads RDE. Position 450 (H450) interacts with L-aspartate. E483 contributes to the ATP binding site. Residue R490 participates in L-aspartate binding. 535–538 contacts ATP; that stretch reads GLDR.

The protein belongs to the class-II aminoacyl-tRNA synthetase family. Type 1 subfamily. Homodimer.

The protein resides in the cytoplasm. The catalysed reaction is tRNA(Asx) + L-aspartate + ATP = L-aspartyl-tRNA(Asx) + AMP + diphosphate. In terms of biological role, aspartyl-tRNA synthetase with relaxed tRNA specificity since it is able to aspartylate not only its cognate tRNA(Asp) but also tRNA(Asn). Reaction proceeds in two steps: L-aspartate is first activated by ATP to form Asp-AMP and then transferred to the acceptor end of tRNA(Asp/Asn). In Pseudomonas putida (strain GB-1), this protein is Aspartate--tRNA(Asp/Asn) ligase.